Consider the following 236-residue polypeptide: LexA repressor (236 aa).

A DNA-binding region (H-T-H motif) is located at residues 26-46 (FDEMKDALDLRSKSGIHRLII). Active-site for autocatalytic cleavage activity residues include Ser157 and Lys195.

This sequence belongs to the peptidase S24 family. Homodimer.

It carries out the reaction Hydrolysis of Ala-|-Gly bond in repressor LexA.. Its function is as follows. Represses a number of genes involved in the response to DNA damage (SOS response), including recA and lexA. In the presence of single-stranded DNA, RecA interacts with LexA causing an autocatalytic cleavage which disrupts the DNA-binding part of LexA, leading to derepression of the SOS regulon and eventually DNA repair. The polypeptide is LexA repressor (Methylocella silvestris (strain DSM 15510 / CIP 108128 / LMG 27833 / NCIMB 13906 / BL2)).